The chain runs to 402 residues: Ferrochelatase, mitochondrial (402 aa).

Residues 1-33 (MAAAGRAARPLVAGGRQLRVPLRWRGQVAAAAP) constitute a mitochondrion transit peptide. Positions 94, 102, and 109 each coordinate protoporphyrin IX. C175 serves as a coordination point for [2Fe-2S] cluster. Catalysis depends on residues H209 and D362. Residues C382, C385, and C390 each contribute to the [2Fe-2S] cluster site.

It belongs to the ferrochelatase family. Homodimer. Homotetramer. It depends on [2Fe-2S] cluster as a cofactor.

It localises to the mitochondrion inner membrane. The catalysed reaction is heme b + 2 H(+) = protoporphyrin IX + Fe(2+). It functions in the pathway porphyrin-containing compound metabolism; protoheme biosynthesis; protoheme from protoporphyrin-IX: step 1/1. Functionally, catalyzes the ferrous insertion into protoporphyrin IX. The polypeptide is Ferrochelatase, mitochondrial (Gallus gallus (Chicken)).